Reading from the N-terminus, the 258-residue chain is uncharacterized protein (258 aa).

The N-terminal stretch at 1–20 (MKCFQKLYIFILILIVLMAG) is a signal peptide. A lipid anchor (N-palmitoyl cysteine) is attached at cysteine 21. A lipid anchor (S-diacylglycerol cysteine) is attached at cysteine 21.

It belongs to the staphylococcal tandem lipoprotein family.

It localises to the cell membrane. This is an uncharacterized protein from Staphylococcus aureus (strain bovine RF122 / ET3-1).